The following is a 116-amino-acid chain: PTS system N,N'-diacetylchitobiose-specific EIIA component (116 aa).

Residues 15–113 enclose the PTS EIIA type-3 domain; that stretch reads EELEEVVMGL…ITELIELHEK (99 aa). Catalysis depends on His89, which acts as the Tele-phosphohistidine intermediate. Position 89 is a phosphohistidine; by HPr (His89).

Forms a complex with ChbB (EIIB). ChbA is a homotrimer. Requires Mg(2+) as cofactor.

The protein localises to the cytoplasm. Its function is as follows. The phosphoenolpyruvate-dependent sugar phosphotransferase system (sugar PTS), a major carbohydrate active transport system, catalyzes the phosphorylation of incoming sugar substrates concomitantly with their translocation across the cell membrane. The enzyme II ChbABC PTS system is involved in the transport of the chitin disaccharide N,N'-diacetylchitobiose (GlcNAc2). This is PTS system N,N'-diacetylchitobiose-specific EIIA component (chbA) from Escherichia coli O157:H7.